A 609-amino-acid polypeptide reads, in one-letter code: Phosphoenolpyruvate carboxykinase [GTP] (609 aa).

Residues arginine 81 and 220-222 each bind substrate; that span reads YGG. Residues lysine 229 and histidine 249 each contribute to the Mn(2+) site. Serine 271 lines the substrate pocket. Residue 272–277 participates in GTP binding; the sequence is ACGKTN. Cysteine 273 is a catalytic residue. Aspartate 296 is a binding site for Mn(2+). Residue 387-389 coordinates substrate; the sequence is NSR. GTP contacts are provided by residues arginine 389, arginine 420, and 515 to 518; that span reads FGEN.

It belongs to the phosphoenolpyruvate carboxykinase [GTP] family. As to quaternary structure, monomer. Mn(2+) serves as cofactor.

The protein resides in the cytoplasm. The catalysed reaction is oxaloacetate + GTP = phosphoenolpyruvate + GDP + CO2. Its pathway is carbohydrate biosynthesis; gluconeogenesis. In terms of biological role, catalyzes the conversion of oxaloacetate (OAA) to phosphoenolpyruvate (PEP), the rate-limiting step in the metabolic pathway that produces glucose from lactate and other precursors derived from the citric acid cycle. This Mycobacterium leprae (strain Br4923) protein is Phosphoenolpyruvate carboxykinase [GTP].